The following is a 90-amino-acid chain: U7-theraphotoxin-Hhn1i (90 aa).

The N-terminal stretch at methionine 1–serine 19 is a signal peptide. Positions phenylalanine 20–glutamate 50 are excised as a propeptide. Disulfide bonds link cysteine 51/cysteine 65, cysteine 58/cysteine 70, and cysteine 64/cysteine 81.

This sequence belongs to the neurotoxin 10 (Hwtx-1) family. 13 (Hntx-13) subfamily. As to expression, expressed by the venom gland.

Its subcellular location is the secreted. Ion channel inhibitor. The polypeptide is U7-theraphotoxin-Hhn1i (Cyriopagopus hainanus (Chinese bird spider)).